A 235-amino-acid chain; its full sequence is Phosphoglycolate phosphatase (235 aa).

The active-site Nucleophile is the Asp14. 3 residues coordinate Mg(2+): Asp14, Asp16, and Asp177.

It belongs to the HAD-like hydrolase superfamily. CbbY/CbbZ/Gph/YieH family. The cofactor is Mg(2+).

It carries out the reaction 2-phosphoglycolate + H2O = glycolate + phosphate. It functions in the pathway organic acid metabolism; glycolate biosynthesis; glycolate from 2-phosphoglycolate: step 1/1. Its function is as follows. Specifically catalyzes the dephosphorylation of 2-phosphoglycolate. Is involved in the dissimilation of the intracellular 2-phosphoglycolate formed during the DNA repair of 3'-phosphoglycolate ends, a major class of DNA lesions induced by oxidative stress. The sequence is that of Phosphoglycolate phosphatase from Neisseria meningitidis serogroup A / serotype 4A (strain DSM 15465 / Z2491).